The chain runs to 116 residues: NADH-ubiquinone oxidoreductase chain 3 (116 aa).

The next 3 helical transmembrane spans lie at 3–23, 56–76, and 87–107; these read LITTIITITITLSAVLATISF, FFLIAILFLLFDLEIALLLPL, and LTLIWSTAVLALLTLGLIYEW.

This sequence belongs to the complex I subunit 3 family.

Its subcellular location is the mitochondrion membrane. The enzyme catalyses a ubiquinone + NADH + 5 H(+)(in) = a ubiquinol + NAD(+) + 4 H(+)(out). Functionally, core subunit of the mitochondrial membrane respiratory chain NADH dehydrogenase (Complex I) that is believed to belong to the minimal assembly required for catalysis. Complex I functions in the transfer of electrons from NADH to the respiratory chain. The immediate electron acceptor for the enzyme is believed to be ubiquinone. This Oncorhynchus tshawytscha (Chinook salmon) protein is NADH-ubiquinone oxidoreductase chain 3 (MT-ND3).